A 314-amino-acid chain; its full sequence is tRNA pseudouridine synthase B (314 aa).

Position 43 (His43) interacts with substrate. Asp48 (nucleophile) is an active-site residue. Substrate is bound by residues Tyr76, Tyr179, and Leu200.

This sequence belongs to the pseudouridine synthase TruB family. Type 1 subfamily.

The catalysed reaction is uridine(55) in tRNA = pseudouridine(55) in tRNA. Responsible for synthesis of pseudouridine from uracil-55 in the psi GC loop of transfer RNAs. This Escherichia coli O139:H28 (strain E24377A / ETEC) protein is tRNA pseudouridine synthase B.